Reading from the N-terminus, the 311-residue chain is tRNA dimethylallyltransferase (311 aa).

9-16 (GPTAVGKT) lines the ATP pocket. 11–16 (TAVGKT) contacts substrate. The segment at 34 to 37 (DSMQ) is interaction with substrate tRNA.

The protein belongs to the IPP transferase family. As to quaternary structure, monomer. Requires Mg(2+) as cofactor.

It carries out the reaction adenosine(37) in tRNA + dimethylallyl diphosphate = N(6)-dimethylallyladenosine(37) in tRNA + diphosphate. Functionally, catalyzes the transfer of a dimethylallyl group onto the adenine at position 37 in tRNAs that read codons beginning with uridine, leading to the formation of N6-(dimethylallyl)adenosine (i(6)A). This chain is tRNA dimethylallyltransferase, found in Clostridium botulinum (strain Hall / ATCC 3502 / NCTC 13319 / Type A).